Here is a 1262-residue protein sequence, read N- to C-terminus: Isoleucine--tRNA ligase, cytoplasmic (1262 aa).

N-acetylmethionine is present on M1. Residues 48 to 58 carry the 'HIGH' region motif; it reads PFATGLPHYGH. The 'KMSKS' region motif lies at 600–604; that stretch reads KMSKR. K603 is an ATP binding site. A phosphoserine mark is found at S1047 and S1049. T1058 is modified (phosphothreonine).

The protein belongs to the class-I aminoacyl-tRNA synthetase family. In terms of assembly, part of a multisubunit complex that groups tRNA ligases for Arg (RARS1), Asp (DARS1), Gln (QARS1), Ile (IARS1), Leu (LARS1), Lys (KARS1), Met (MARS1) the bifunctional ligase for Glu and Pro (EPRS1) and the auxiliary subunits AIMP1/p43, AIMP2/p38 and EEF1E1/p18. As to expression, expressed in liver and muscle (at protein level).

The protein resides in the cytoplasm. Its subcellular location is the cytosol. The enzyme catalyses tRNA(Ile) + L-isoleucine + ATP = L-isoleucyl-tRNA(Ile) + AMP + diphosphate. Its function is as follows. Catalyzes the specific attachment of an amino acid to its cognate tRNA in a 2 step reaction: the amino acid (AA) is first activated by ATP to form AA-AMP and then transferred to the acceptor end of the tRNA. The chain is Isoleucine--tRNA ligase, cytoplasmic from Homo sapiens (Human).